We begin with the raw amino-acid sequence, 134 residues long: MRGATTDDSITSSVRALPAVVPGSGLFLPMVLHVSSLLSLDQLMGSKSDDRPRLIGIGVSVTRVTPDPTRPAMAHTPSVFLGTRSDLIMFSPHNLKNSSVLQPGNDLSSFLLSFSSSVPRNPDPNFSASIAIVS.

This is an uncharacterized protein from Ictaluridae (bullhead catfishes).